The primary structure comprises 882 residues: Translation initiation factor IF-2 (882 aa).

The tract at residues 28–294 is disordered; that stretch reads GIRKSADDSV…SSLQQGFQKP (267 aa). Polar residues predominate over residues 67–81; that stretch reads STLNIPGTGGKSKSV. A compositionally biased stretch (basic and acidic residues) spans 92 to 209; the sequence is VKRDPQEAER…RMAEENKWTD (118 aa). Basic residues predominate over residues 244–258; sequence GRGRNAKAARPKKGN. The segment covering 259 to 272 has biased composition (basic and acidic residues); the sequence is KHAESKADREEARA. The region spanning 381-550 is the tr-type G domain; sequence PRAPVVTIMG…LLQAEVLELK (170 aa). The G1 stretch occupies residues 390–397; sequence GHVDHGKT. 390–397 lines the GTP pocket; it reads GHVDHGKT. Residues 415–419 form a G2 region; sequence GITQH. The interval 436–439 is G3; sequence DTPG. GTP-binding positions include 436-440 and 490-493; these read DTPGH and NKID. Residues 490 to 493 form a G4 region; sequence NKID. The G5 stretch occupies residues 526–528; it reads SAK. Lys-800 is subject to N6-acetyllysine.

Belongs to the TRAFAC class translation factor GTPase superfamily. Classic translation factor GTPase family. IF-2 subfamily.

It is found in the cytoplasm. One of the essential components for the initiation of protein synthesis. Protects formylmethionyl-tRNA from spontaneous hydrolysis and promotes its binding to the 30S ribosomal subunits. Also involved in the hydrolysis of GTP during the formation of the 70S ribosomal complex. The polypeptide is Translation initiation factor IF-2 (Shigella flexneri serotype 5b (strain 8401)).